The sequence spans 143 residues: MSLSGKDKSVVKAFWDKMSPKSAEIGAEALGRMLTVYPQTKTYFSHWADVGPDSAQVKKHGATIMAAVGDAVGKIDDLVGGLSALSELHAFKLRVDPANFRILAHNIILVTAMYFPTDFTPEIHVSVDKFLQNLALALAERYR.

One can recognise a Globin domain in the interval 2–143; the sequence is SLSGKDKSVV…LALALAERYR (142 aa). Residue His-60 coordinates O2. His-89 provides a ligand contact to heme b.

This sequence belongs to the globin family. As to quaternary structure, heterotetramer of two alpha chains and two beta chains. Red blood cells.

Its function is as follows. Involved in oxygen transport from gills to the various peripheral tissues. In Seriola quinqueradiata (Five-ray yellowtail), this protein is Hemoglobin subunit alpha-A (hbaa).